The following is a 288-amino-acid chain: Bis(5'-nucleosyl)-tetraphosphatase, symmetrical (288 aa).

The protein belongs to the Ap4A hydrolase family.

It carries out the reaction P(1),P(4)-bis(5'-adenosyl) tetraphosphate + H2O = 2 ADP + 2 H(+). Functionally, hydrolyzes diadenosine 5',5'''-P1,P4-tetraphosphate to yield ADP. The protein is Bis(5'-nucleosyl)-tetraphosphatase, symmetrical of Pseudomonas putida (strain W619).